An 88-amino-acid polypeptide reads, in one-letter code: Small ribosomal subunit protein uS15 (88 aa).

This sequence belongs to the universal ribosomal protein uS15 family. As to quaternary structure, part of the 30S ribosomal subunit. Forms a bridge to the 50S subunit in the 70S ribosome, contacting the 23S rRNA.

One of the primary rRNA binding proteins, it binds directly to 16S rRNA where it helps nucleate assembly of the platform of the 30S subunit by binding and bridging several RNA helices of the 16S rRNA. Functionally, forms an intersubunit bridge (bridge B4) with the 23S rRNA of the 50S subunit in the ribosome. The chain is Small ribosomal subunit protein uS15 from Opitutus terrae (strain DSM 11246 / JCM 15787 / PB90-1).